A 174-amino-acid polypeptide reads, in one-letter code: Shikimate kinase 2 (174 aa).

Residue 12–17 coordinates ATP; that stretch reads GAGKTT. Mg(2+) contacts are provided by Thr16 and Asp32. Asp34, Arg58, and Gly79 together coordinate substrate. Residues 112–126 form an LID domain region; sequence AEDPEEAQRPSLTGK. Arg120 is an ATP binding site. Arg139 serves as a coordination point for substrate. Gln155 provides a ligand contact to ATP.

Belongs to the shikimate kinase family. AroL subfamily. Monomer. Mg(2+) is required as a cofactor.

The protein resides in the cytoplasm. It catalyses the reaction shikimate + ATP = 3-phosphoshikimate + ADP + H(+). It participates in metabolic intermediate biosynthesis; chorismate biosynthesis; chorismate from D-erythrose 4-phosphate and phosphoenolpyruvate: step 5/7. Functionally, catalyzes the specific phosphorylation of the 3-hydroxyl group of shikimic acid using ATP as a cosubstrate. This Yersinia pseudotuberculosis serotype IB (strain PB1/+) protein is Shikimate kinase 2.